We begin with the raw amino-acid sequence, 1225 residues long: DNA-directed RNA polymerase subunit beta' (1225 aa).

The Zn(2+) site is built by C60, C62, C75, and C78. Mg(2+) contacts are provided by D450, D452, and D454. Residues C818, C892, C899, and C902 each coordinate Zn(2+).

Belongs to the RNA polymerase beta' chain family. The RNAP catalytic core consists of 2 alpha, 1 beta, 1 beta' and 1 omega subunit. When a sigma factor is associated with the core the holoenzyme is formed, which can initiate transcription. It depends on Mg(2+) as a cofactor. The cofactor is Zn(2+).

It carries out the reaction RNA(n) + a ribonucleoside 5'-triphosphate = RNA(n+1) + diphosphate. Its function is as follows. DNA-dependent RNA polymerase catalyzes the transcription of DNA into RNA using the four ribonucleoside triphosphates as substrates. The chain is DNA-directed RNA polymerase subunit beta' from Streptococcus pneumoniae (strain Hungary19A-6).